The chain runs to 500 residues: Lysine--tRNA ligase (500 aa).

Residues Glu-410 and Glu-417 each contribute to the Mg(2+) site.

Belongs to the class-II aminoacyl-tRNA synthetase family. Homodimer. Requires Mg(2+) as cofactor.

The protein localises to the cytoplasm. The catalysed reaction is tRNA(Lys) + L-lysine + ATP = L-lysyl-tRNA(Lys) + AMP + diphosphate. In Shewanella sp. (strain ANA-3), this protein is Lysine--tRNA ligase.